Consider the following 295-residue polypeptide: Protease HtpX (295 aa).

The next 2 membrane-spanning stretches (helical) occupy residues 4–24 and 42–62; these read IFLF…VLRL and ALLI…LAIS. His147 provides a ligand contact to Zn(2+). Residue Glu148 is part of the active site. Residue His151 participates in Zn(2+) binding. 2 consecutive transmembrane segments (helical) span residues 155–175 and 197–217; these read GDMV…IFLA and FWIT…IIVM. Glu224 provides a ligand contact to Zn(2+).

The protein belongs to the peptidase M48B family. Zn(2+) is required as a cofactor.

It is found in the cell inner membrane. The protein is Protease HtpX of Thioalkalivibrio sulfidiphilus (strain HL-EbGR7).